A 329-amino-acid chain; its full sequence is MMSNSSSEIDVVKTRIPTYDEDDDTILYAYETKPEFVNKEPNIVSDASCNTEEQLKTVNDVLIHCQVIYDAMQNLDKKIDVIRRKVSKIQRFHARSLWTNRKRYGYKKYSYRLAKKLKLQKMKKNEVYESFSYPESYSPTLPVSRRENNSPSNLPRPSFCMEEYQPAEPEEDPILSRTPSPVHPSDFSEHNYQPYYASDGAMYGSSSGPCLGNPRADSIHNTYSTDHASAAPPSVTRSPFENDCYIKEGSITKHPSTWSVEAVVLFLKQTDPVALCPLVDLFRSHEIDGKALLLLTSDVLLKHLGVKLGTAVKLCYYIDRLKQGKCFEN.

Residues 136–160 (SYSPTLPVSRRENNSPSNLPRPSFC) form a disordered region. 2 positions are modified to phosphoserine: S138 and S238. The 68-residue stretch at 258-325 (WSVEAVVLFL…YYIDRLKQGK (68 aa)) folds into the SAM domain.

Belongs to the SCM family.

The protein localises to the nucleus. Putative Polycomb group (PcG) protein. PcG proteins act by forming multiprotein complexes, which are required to maintain the transcriptionally repressive state of homeotic genes throughout development. May be involved in spermatogenesis during sexual maturation. The sequence is that of Sex comb on midleg-like protein 1 (SCML1) from Pongo pygmaeus (Bornean orangutan).